Here is a 697-residue protein sequence, read N- to C-terminus: Elongation factor G 2 (697 aa).

Residues 5-280 (SKYRNIGIFA…AVVDYLPAPD (276 aa)) enclose the tr-type G domain. GTP is bound by residues 14-21 (AHVDAGKT), 78-82 (DTPGH), and 132-135 (NKLD).

Belongs to the TRAFAC class translation factor GTPase superfamily. Classic translation factor GTPase family. EF-G/EF-2 subfamily.

It localises to the cytoplasm. Catalyzes the GTP-dependent ribosomal translocation step during translation elongation. During this step, the ribosome changes from the pre-translocational (PRE) to the post-translocational (POST) state as the newly formed A-site-bound peptidyl-tRNA and P-site-bound deacylated tRNA move to the P and E sites, respectively. Catalyzes the coordinated movement of the two tRNA molecules, the mRNA and conformational changes in the ribosome. This is Elongation factor G 2 (fusB) from Shewanella oneidensis (strain ATCC 700550 / JCM 31522 / CIP 106686 / LMG 19005 / NCIMB 14063 / MR-1).